Reading from the N-terminus, the 460-residue chain is tRNA modification GTPase MnmE (460 aa).

Arg29, Glu91, and Lys132 together coordinate (6S)-5-formyl-5,6,7,8-tetrahydrofolate. Positions 227–383 constitute a TrmE-type G domain; it reads GISIALIGKT…LIDTIIKKCG (157 aa). Asn237 is a K(+) binding site. GTP contacts are provided by residues 237–242, 256–262, and 281–284; these read NVGKSS, TNIPGTT, and DTAG. Position 241 (Ser241) interacts with Mg(2+). K(+) is bound by residues Thr256, Ile258, and Thr261. Position 262 (Thr262) interacts with Mg(2+). (6S)-5-formyl-5,6,7,8-tetrahydrofolate is bound at residue Lys460.

It belongs to the TRAFAC class TrmE-Era-EngA-EngB-Septin-like GTPase superfamily. TrmE GTPase family. As to quaternary structure, homodimer. Heterotetramer of two MnmE and two MnmG subunits. The cofactor is K(+).

The protein resides in the cytoplasm. Functionally, exhibits a very high intrinsic GTPase hydrolysis rate. Involved in the addition of a carboxymethylaminomethyl (cmnm) group at the wobble position (U34) of certain tRNAs, forming tRNA-cmnm(5)s(2)U34. The protein is tRNA modification GTPase MnmE of Prochlorococcus marinus (strain MIT 9312).